Reading from the N-terminus, the 155-residue chain is Transcriptional repressor NrdR (155 aa).

Positions M1–G22 are disordered. A zinc finger spans residues C3–C34. Positions G7–G22 are enriched in basic and acidic residues. The 91-residue stretch at I49–D139 folds into the ATP-cone domain.

Belongs to the NrdR family. The cofactor is Zn(2+).

Its function is as follows. Negatively regulates transcription of bacterial ribonucleotide reductase nrd genes and operons by binding to NrdR-boxes. This chain is Transcriptional repressor NrdR, found in Phenylobacterium zucineum (strain HLK1).